Consider the following 421-residue polypeptide: Histidine--tRNA ligase (421 aa).

It belongs to the class-II aminoacyl-tRNA synthetase family. As to quaternary structure, homodimer.

Its subcellular location is the cytoplasm. It carries out the reaction tRNA(His) + L-histidine + ATP = L-histidyl-tRNA(His) + AMP + diphosphate + H(+). This is Histidine--tRNA ligase from Ureaplasma urealyticum serovar 10 (strain ATCC 33699 / Western).